The following is a 364-amino-acid chain: tRNA N6-adenosine threonylcarbamoyltransferase (364 aa).

The Fe cation site is built by His115 and His119. Substrate contacts are provided by residues 137–141 (LVSGG), Asp170, Gly183, and Asn288. Residue Asp316 participates in Fe cation binding.

The protein belongs to the KAE1 / TsaD family. Requires Fe(2+) as cofactor.

The protein resides in the cytoplasm. It catalyses the reaction L-threonylcarbamoyladenylate + adenosine(37) in tRNA = N(6)-L-threonylcarbamoyladenosine(37) in tRNA + AMP + H(+). Required for the formation of a threonylcarbamoyl group on adenosine at position 37 (t(6)A37) in tRNAs that read codons beginning with adenine. Is involved in the transfer of the threonylcarbamoyl moiety of threonylcarbamoyl-AMP (TC-AMP) to the N6 group of A37, together with TsaE and TsaB. TsaD likely plays a direct catalytic role in this reaction. In Bartonella tribocorum (strain CIP 105476 / IBS 506), this protein is tRNA N6-adenosine threonylcarbamoyltransferase.